The sequence spans 679 residues: Transketolase (679 aa).

His30 provides a ligand contact to substrate. Thiamine diphosphate is bound by residues His69 and 116–118 (GPL). Mg(2+) is bound at residue Asp157. The thiamine diphosphate site is built by Gly158 and Asn187. Residues Asn187 and Ile189 each coordinate Mg(2+). Substrate is bound by residues His262, Arg358, and Ser385. Thiamine diphosphate is bound at residue His262. Glu417 and Phe444 together coordinate thiamine diphosphate. The active-site Proton donor is Glu417. Positions 468, 476, and 527 each coordinate substrate.

The protein belongs to the transketolase family. Homodimer. Mg(2+) is required as a cofactor. It depends on Ca(2+) as a cofactor. The cofactor is Mn(2+). Co(2+) serves as cofactor. Requires thiamine diphosphate as cofactor.

It carries out the reaction D-sedoheptulose 7-phosphate + D-glyceraldehyde 3-phosphate = aldehydo-D-ribose 5-phosphate + D-xylulose 5-phosphate. Its function is as follows. Catalyzes the transfer of a two-carbon ketol group from a ketose donor to an aldose acceptor, via a covalent intermediate with the cofactor thiamine pyrophosphate. The chain is Transketolase (TKL1) from Kluyveromyces lactis (strain ATCC 8585 / CBS 2359 / DSM 70799 / NBRC 1267 / NRRL Y-1140 / WM37) (Yeast).